Here is a 243-residue protein sequence, read N- to C-terminus: Putative glycerophosphodiester phosphodiesterase YhdW (243 aa).

The GP-PDE domain maps to 1–238 (MYIIAHRGAS…DYPDFIIKDG (238 aa)). The Proton acceptor role is filled by His6. Ca(2+) is bound by residues Glu33 and Asp35. His48 acts as the Proton donor in catalysis. Residue Glu107 participates in Ca(2+) binding.

Belongs to the glycerophosphoryl diester phosphodiesterase family. It depends on Ca(2+) as a cofactor.

The enzyme catalyses a sn-glycero-3-phosphodiester + H2O = an alcohol + sn-glycerol 3-phosphate + H(+). Functionally, glycerophosphodiester phosphodiesterase hydrolyzes glycerophosphodiesters into glycerol-3-phosphate (G3P) and the corresponding alcohol. In Bacillus subtilis (strain 168), this protein is Putative glycerophosphodiester phosphodiesterase YhdW (yhdW).